Here is a 57-residue protein sequence, read N- to C-terminus: Cecropin-A (57 aa).

An N-terminal signal peptide occupies residues 1 to 21; the sequence is IFFFVFACLLALSAVSAAPEP.

The protein belongs to the cecropin family.

The protein localises to the secreted. In terms of biological role, cecropins have lytic and antibacterial activity against several Gram-positive and Gram-negative bacteria. In Spodoptera litura (Asian cotton leafworm), this protein is Cecropin-A (CECA).